We begin with the raw amino-acid sequence, 504 residues long: Glutamate--tRNA ligase (504 aa).

The 'HIGH' region signature appears at 10–20 (PSPTGDPHVGT). The 'KMSKS' region motif lies at 251-255 (KLSKR). Lysine 254 serves as a coordination point for ATP.

It belongs to the class-I aminoacyl-tRNA synthetase family. Glutamate--tRNA ligase type 1 subfamily. As to quaternary structure, monomer.

Its subcellular location is the cytoplasm. It carries out the reaction tRNA(Glu) + L-glutamate + ATP = L-glutamyl-tRNA(Glu) + AMP + diphosphate. Its function is as follows. Catalyzes the attachment of glutamate to tRNA(Glu) in a two-step reaction: glutamate is first activated by ATP to form Glu-AMP and then transferred to the acceptor end of tRNA(Glu). The sequence is that of Glutamate--tRNA ligase from Cellvibrio japonicus (strain Ueda107) (Pseudomonas fluorescens subsp. cellulosa).